The primary structure comprises 215 residues: UPF0502 protein YceH (215 aa).

Lys80 bears the N6-acetyllysine mark.

It belongs to the UPF0502 family.

This chain is UPF0502 protein YceH, found in Escherichia coli O157:H7.